The sequence spans 118 residues: Ribonuclease P protein component (118 aa).

Belongs to the RnpA family. As to quaternary structure, consists of a catalytic RNA component (M1 or rnpB) and a protein subunit.

The catalysed reaction is Endonucleolytic cleavage of RNA, removing 5'-extranucleotides from tRNA precursor.. Its function is as follows. RNaseP catalyzes the removal of the 5'-leader sequence from pre-tRNA to produce the mature 5'-terminus. It can also cleave other RNA substrates such as 4.5S RNA. The protein component plays an auxiliary but essential role in vivo by binding to the 5'-leader sequence and broadening the substrate specificity of the ribozyme. The chain is Ribonuclease P protein component from Desulfatibacillum aliphaticivorans.